Here is an 872-residue protein sequence, read N- to C-terminus: Leucine--tRNA ligase (872 aa).

The 'HIGH' region motif lies at 42–52; sequence PYPSGKLHMGH. Residues 632-636 carry the 'KMSKS' region motif; that stretch reads KMSKS. ATP is bound at residue Lys635.

The protein belongs to the class-I aminoacyl-tRNA synthetase family.

It is found in the cytoplasm. It carries out the reaction tRNA(Leu) + L-leucine + ATP = L-leucyl-tRNA(Leu) + AMP + diphosphate. The polypeptide is Leucine--tRNA ligase (Chromobacterium violaceum (strain ATCC 12472 / DSM 30191 / JCM 1249 / CCUG 213 / NBRC 12614 / NCIMB 9131 / NCTC 9757 / MK)).